Reading from the N-terminus, the 471-residue chain is Tryptophanase (471 aa).

3 positions are modified to N6-acetyllysine: Lys-5, Lys-115, and Lys-156. Lys-270 is subject to N6-(pyridoxal phosphate)lysine. At Lys-450 the chain carries N6-acetyllysine.

This sequence belongs to the beta-eliminating lyase family. As to quaternary structure, homotetramer. Pyridoxal 5'-phosphate serves as cofactor.

The enzyme catalyses L-tryptophan + H2O = indole + pyruvate + NH4(+). It functions in the pathway amino-acid degradation; L-tryptophan degradation via pyruvate pathway; indole and pyruvate from L-tryptophan: step 1/1. The sequence is that of Tryptophanase from Escherichia coli O9:H4 (strain HS).